We begin with the raw amino-acid sequence, 502 residues long: UPF0371 protein CTC_00401 (502 aa).

This sequence belongs to the UPF0371 family.

The polypeptide is UPF0371 protein CTC_00401 (Clostridium tetani (strain Massachusetts / E88)).